Consider the following 394-residue polypeptide: Acid ceramidase (394 aa).

The N-terminal stretch at 1–20 (MLGRSLLTWVLAAAVTCAQA) is a signal peptide. A disulfide bond links cysteine 30 and cysteine 339. Cysteine 142 serves as the catalytic Nucleophile. Residues asparagine 194, asparagine 258, asparagine 285, and asparagine 341 are each glycosylated (N-linked (GlcNAc...) asparagine). A disulfide bridge connects residues cysteine 387 and cysteine 391.

This sequence belongs to the acid ceramidase family. In terms of assembly, heterodimer; disulfide-linked. The heterodimer is composed of the disulfide-linked alpha and beta chains produced by autocatalytic cleavage of the precursor. Post-translationally, N-glycosylated. Proteolytically cleaved into two chains alpha and beta that remain associated via a disulfide bond. Cleavage gives rise to a conformation change that activates the enzyme. The same catalytic Cys residue mediates the autoproteolytic cleavage and subsequent hydrolysis of lipid substrates. The beta chain may undergo an additional C-terminal processing.

It localises to the lysosome. It is found in the secreted. It carries out the reaction an N-acylsphing-4-enine + H2O = sphing-4-enine + a fatty acid. The enzyme catalyses N-dodecanoylsphing-4-enine + H2O = dodecanoate + sphing-4-enine. The catalysed reaction is N-tetradecanoylsphing-4-enine + H2O = tetradecanoate + sphing-4-enine. It catalyses the reaction N-hexadecanoylsphing-4-enine + H2O = sphing-4-enine + hexadecanoate. It carries out the reaction N-octadecanoylsphing-4-enine + H2O = sphing-4-enine + octadecanoate. The enzyme catalyses N-dodecanoyl-(4R)-hydroxysphinganine + H2O = (4R)-hydroxysphinganine + dodecanoate. The catalysed reaction is N-(dodecanoyl)-sphinganine + H2O = dodecanoate + sphinganine. It catalyses the reaction N-(acetyl)-sphing-4-enine + H2O = sphing-4-enine + acetate. It carries out the reaction N-(hexanoyl)sphing-4-enine + H2O = hexanoate + sphing-4-enine. The enzyme catalyses N-octanoylsphing-4-enine + H2O = octanoate + sphing-4-enine. The catalysed reaction is N-(9Z-octadecenoyl)-sphing-4-enine + H2O = sphing-4-enine + (9Z)-octadecenoate. It catalyses the reaction N-dodecanoylethanolamine + H2O = dodecanoate + ethanolamine. The protein operates within lipid metabolism; sphingolipid metabolism. Functionally, lysosomal ceramidase that hydrolyzes sphingolipid ceramides into sphingosine and free fatty acids at acidic pH. Ceramides, sphingosine, and its phosphorylated form sphingosine-1-phosphate are bioactive lipids that mediate cellular signaling pathways regulating several biological processes including cell proliferation, apoptosis and differentiation. Has a higher catalytic efficiency towards C12-ceramides versus other ceramides. Also catalyzes the reverse reaction allowing the synthesis of ceramides from fatty acids and sphingosine. For the reverse synthetic reaction, the natural sphingosine D-erythro isomer is more efficiently utilized as a substrate compared to D-erythro-dihydrosphingosine and D-erythro-phytosphingosine, while the fatty acids with chain lengths of 12 or 14 carbons are the most efficiently used. Also has an N-acylethanolamine hydrolase activity. By regulating the levels of ceramides, sphingosine and sphingosine-1-phosphate in the epidermis, mediates the calcium-induced differentiation of epidermal keratinocytes. Also indirectly regulates tumor necrosis factor/TNF-induced apoptosis. By regulating the intracellular balance between ceramides and sphingosine, in adrenocortical cells, probably also acts as a regulator of steroidogenesis. The chain is Acid ceramidase from Rattus norvegicus (Rat).